The sequence spans 99 residues: MALTFKDIERVANLARLELRPDETEHTLSQLNGFFALVEQMQAVNTDGVEPLAHPAALLGEVALRLREDIASEPNQREASQASAPAVERGLFLVPKVIE.

Belongs to the GatC family. In terms of assembly, heterotrimer of A, B and C subunits.

The enzyme catalyses L-glutamyl-tRNA(Gln) + L-glutamine + ATP + H2O = L-glutaminyl-tRNA(Gln) + L-glutamate + ADP + phosphate + H(+). It catalyses the reaction L-aspartyl-tRNA(Asn) + L-glutamine + ATP + H2O = L-asparaginyl-tRNA(Asn) + L-glutamate + ADP + phosphate + 2 H(+). Functionally, allows the formation of correctly charged Asn-tRNA(Asn) or Gln-tRNA(Gln) through the transamidation of misacylated Asp-tRNA(Asn) or Glu-tRNA(Gln) in organisms which lack either or both of asparaginyl-tRNA or glutaminyl-tRNA synthetases. The reaction takes place in the presence of glutamine and ATP through an activated phospho-Asp-tRNA(Asn) or phospho-Glu-tRNA(Gln). The sequence is that of Aspartyl/glutamyl-tRNA(Asn/Gln) amidotransferase subunit C from Polaromonas naphthalenivorans (strain CJ2).